The following is a 394-amino-acid chain: Phosphoglycerate kinase (394 aa).

Substrate-binding positions include 21–23 (DFN), arginine 36, 59–62 (HLGR), arginine 118, and arginine 151. Residue serine 183 is modified to Phosphoserine. 2 residues coordinate ATP: lysine 201 and glycine 292. Threonine 299 carries the phosphothreonine modification. ATP is bound by residues glutamate 323 and 350–353 (GGDS).

It belongs to the phosphoglycerate kinase family. In terms of assembly, monomer.

It localises to the cytoplasm. The catalysed reaction is (2R)-3-phosphoglycerate + ATP = (2R)-3-phospho-glyceroyl phosphate + ADP. It functions in the pathway carbohydrate degradation; glycolysis; pyruvate from D-glyceraldehyde 3-phosphate: step 2/5. This is Phosphoglycerate kinase from Bacillus cereus (strain ATCC 10987 / NRS 248).